A 428-amino-acid chain; its full sequence is Folylpolyglutamate synthase (428 aa).

Residue 49–52 participates in ATP binding; that stretch reads GKGS. S73 contacts Mg(2+). The (6R)-5,10-methylenetetrahydrofolyl-(gamma-L-Glu)n site is built by F75 and R82. Mg(2+) is bound by residues E143 and H170. At K185 the chain carries N6-carboxylysine. Residues N264, R300, and 313–316 each bind ATP; that span reads DGAH. S417 provides a ligand contact to (6R)-5,10-methylenetetrahydrofolyl-(gamma-L-Glu)n.

The protein belongs to the folylpolyglutamate synthase family. In terms of assembly, monomer. It depends on Mg(2+) as a cofactor.

The catalysed reaction is (6S)-5,6,7,8-tetrahydrofolyl-(gamma-L-Glu)(n) + L-glutamate + ATP = (6S)-5,6,7,8-tetrahydrofolyl-(gamma-L-Glu)(n+1) + ADP + phosphate + H(+). The enzyme catalyses (6R)-5,10-methylenetetrahydrofolyl-(gamma-L-Glu)(n) + L-glutamate + ATP = (6R)-5,10-methylenetetrahydrofolyl-(gamma-L-Glu)(n+1) + ADP + phosphate + H(+). It catalyses the reaction 10-formyltetrahydrofolyl-(gamma-L-Glu)(n) + L-glutamate + ATP = 10-formyltetrahydrofolyl-(gamma-L-Glu)(n+1) + ADP + phosphate + H(+). Competitively inhibited by adenosine 5'-(3-thio)triphosphate and beta,gamma-methylene-ATP. In terms of biological role, involved in the conversion of folates to polyglutamate derivatives, and likely functions in the retention of cellular folate pools. Catalyzes successive MgATP-dependent additions of glutamate to a pteroylmonoglutamate substrate, with a high preference for 5,10-methylenetetrahydrofolate (mTHF). Thus, metabolizes mTHF to the tetraglutamate derivative, but longer glutamate chain length products are not observed. Tetrahydrofolate (H4PteGlu) and 10-formyl-H4PteGlu are poorer folate substrates. In contrast to E.coli FolC, this enzyme does not display dihydrofolate synthase activity. In Lacticaseibacillus casei (Lactobacillus casei), this protein is Folylpolyglutamate synthase.